A 508-amino-acid polypeptide reads, in one-letter code: Photosystem II CP47 reaction center protein (508 aa).

6 helical membrane passes run 21-36, 101-115, 140-156, 203-218, 237-252, and 457-472; these read AVHI…WAGS, IVFS…IWHW, GIHL…FGAF, IAAG…FHLS, VLSS…AFVV, and SFAL…HGAR.

Belongs to the PsbB/PsbC family. PsbB subfamily. In terms of assembly, PSII is composed of 1 copy each of membrane proteins PsbA, PsbB, PsbC, PsbD, PsbE, PsbF, PsbH, PsbI, PsbJ, PsbK, PsbL, PsbM, PsbT, PsbX, PsbY, PsbZ, Psb30/Ycf12, at least 3 peripheral proteins of the oxygen-evolving complex and a large number of cofactors. It forms dimeric complexes. It depends on Binds multiple chlorophylls. PSII binds additional chlorophylls, carotenoids and specific lipids. as a cofactor.

The protein localises to the plastid. It is found in the chloroplast thylakoid membrane. In terms of biological role, one of the components of the core complex of photosystem II (PSII). It binds chlorophyll and helps catalyze the primary light-induced photochemical processes of PSII. PSII is a light-driven water:plastoquinone oxidoreductase, using light energy to abstract electrons from H(2)O, generating O(2) and a proton gradient subsequently used for ATP formation. In Buxus microphylla (Littleleaf boxwood), this protein is Photosystem II CP47 reaction center protein.